A 260-amino-acid polypeptide reads, in one-letter code: POLG alternative reading frame (260 aa).

2 disordered regions span residues 1–50 (MEPK…LRPR) and 108–219 (ARRG…RRGG). Composition is skewed to low complexity over residues 36–48 (AGSSSGALGLQLR), 116–154 (GRGAPQRRAPAEARALGAASRALARRGAAPAAPLRGQPG), and 164–186 (AEPALPGGGQLAVAGPAAPEAPG). The interval 104–130 (ANLRARRGDAWRGRGAPQRRAPAEARA) is required for nucleolar localization. Composition is skewed to gly residues over residues 187–199 (LGLGGGLDPVRPR) and 209–219 (RGAGPGVRRGG).

Interacts with C1QBP; the interaction results in nucleolar localization of C1QBP, probably due to prevention of C1QBP maturation and redirection from mitochondria to nucleoli. Undergoes proteolytic cleavage to produce a secreted C-terminal fragment.

The protein resides in the nucleus. It is found in the nucleolus. It localises to the secreted. The chain is POLG alternative reading frame from Homo sapiens (Human).